The sequence spans 452 residues: Glycine receptor subunit alpha-2 (452 aa).

Residues 1–27 (MNRQLVNILTALFAFFLETNHFRTAFC) form the signal peptide. The Extracellular segment spans residues 28–256 (KDHDSRSGKQ…KFHLERQMGY (229 aa)). N-linked (GlcNAc...) asparagine glycosylation is present at Asn72. Arg99 is a binding site for glycine. Arg99 contacts strychnine. N-linked (GlcNAc...) asparagine glycosylation occurs at Asn103. Ser163 is a binding site for glycine. An intrachain disulfide couples Cys172 to Cys186. The Zn(2+) site is built by Glu226 and Glu228. Cys232 and Cys243 are disulfide-bonded. Position 238 (Thr238) interacts with glycine. Residue His249 coordinates Zn(2+). The chain crosses the membrane as a helical span at residues 257–278 (YLIQMYIPSLLIVILSWVSFWI). Topologically, residues 279 to 283 (NMDAA) are cytoplasmic. Residues 284–304 (PARVALGITTVLTMTTQSSGS) form a helical membrane-spanning segment. Topologically, residues 305 to 315 (RASLPKVSYVK) are extracellular. The chain crosses the membrane as a helical span at residues 316 to 336 (AIDIWMAVCLLFVFAALLEYA). Residues 337 to 420 (AVNFVSRQHK…FVDRAKRIDT (84 aa)) are Cytoplasmic-facing. Residues 421–441 (ISRAAFPLAFLIFNIFYWITY) traverse the membrane as a helical segment. At 442 to 452 (KIIRHEDVHKK) the chain is on the extracellular side.

Belongs to the ligand-gated ion channel (TC 1.A.9) family. Glycine receptor (TC 1.A.9.3) subfamily. GLRA2 sub-subfamily. As to quaternary structure, interacts with GLRB. Heteropentamer composed of GLRA2 and GLRB. Functional GLRB-GLRA2 heteropentamers contain four GLRA2 subunits and one GLRB subunit, although alternative subunit composition cannot be excluded. Homopentamer (in vitro). Both homopentamers and heteropentamers form functional ion channels, but their characteristics are subtly different.

It localises to the postsynaptic cell membrane. It is found in the synapse. The protein localises to the cell membrane. The protein resides in the cell projection. The catalysed reaction is chloride(in) = chloride(out). Channel opening is triggered by extracellular glycine. Channel opening is also triggered by taurine and beta-alanine. Inhibited by strychnine. Inhibited by picrotoxin. Channel activity is potentiated by 10-100 uM Zn(2+). Channel activity is marginally increased by 50 mM ethanol; it is strongly increased by a combination of 0.5 uM Zn(2+) and 50 mM ethanol. Channel activity is inhibited by 100-1000 uM Zn(2+). Subunit of heteromeric glycine-gated chloride channels. Plays a role in synaptic plasticity. Contributes to the generation of inhibitory postsynaptic currents, and is involved in the down-regulation of neuronal excitability. Plays a role in cellular responses to ethanol. The chain is Glycine receptor subunit alpha-2 from Homo sapiens (Human).